The chain runs to 837 residues: Protein translocase subunit SecA (837 aa).

ATP contacts are provided by residues Gln85, Gly103–Thr107, and Asp493. Cys821, Cys823, Cys832, and His833 together coordinate Zn(2+).

It belongs to the SecA family. In terms of assembly, monomer and homodimer. Part of the essential Sec protein translocation apparatus which comprises SecA, SecYEG and auxiliary proteins SecDF. Other proteins may also be involved. Zn(2+) serves as cofactor.

The protein resides in the cell membrane. It localises to the cytoplasm. It catalyses the reaction ATP + H2O + cellular proteinSide 1 = ADP + phosphate + cellular proteinSide 2.. In terms of biological role, part of the Sec protein translocase complex. Interacts with the SecYEG preprotein conducting channel. Has a central role in coupling the hydrolysis of ATP to the transfer of proteins into and across the cell membrane, serving as an ATP-driven molecular motor driving the stepwise translocation of polypeptide chains across the membrane. This chain is Protein translocase subunit SecA, found in Streptococcus pneumoniae serotype 2 (strain D39 / NCTC 7466).